The sequence spans 64 residues: Small ribosomal subunit protein bS21 (64 aa).

Positions 39–64 are disordered; the sequence is EKPSVKRKKKALAAKKRAVKKARKSF. Basic residues predominate over residues 43–64; sequence VKRKKKALAAKKRAVKKARKSF.

It belongs to the bacterial ribosomal protein bS21 family.

This Myxococcus xanthus protein is Small ribosomal subunit protein bS21 (rpsU).